The following is an 860-amino-acid chain: Leucine--tRNA ligase (860 aa).

The 'HIGH' region signature appears at 42 to 52 (PYPSGRLHMGH). A 'KMSKS' region motif is present at residues 619–623 (KMSKS). Residue Lys-622 coordinates ATP.

This sequence belongs to the class-I aminoacyl-tRNA synthetase family.

The protein localises to the cytoplasm. It catalyses the reaction tRNA(Leu) + L-leucine + ATP = L-leucyl-tRNA(Leu) + AMP + diphosphate. This Salmonella agona (strain SL483) protein is Leucine--tRNA ligase.